A 199-amino-acid chain; its full sequence is Ribonuclease HII (199 aa).

The RNase H type-2 domain occupies 7–196; the sequence is PWVCGVDEAG…VRELMANEKD (190 aa). A divalent metal cation contacts are provided by Asp-13, Glu-14, and Asp-105.

The protein belongs to the RNase HII family. Mn(2+) is required as a cofactor. The cofactor is Mg(2+).

It localises to the cytoplasm. It catalyses the reaction Endonucleolytic cleavage to 5'-phosphomonoester.. Its function is as follows. Endonuclease that specifically degrades the RNA of RNA-DNA hybrids. This Nitrosospira multiformis (strain ATCC 25196 / NCIMB 11849 / C 71) protein is Ribonuclease HII.